The primary structure comprises 846 residues: Translation initiation factor IF-2 (846 aa).

The interval 198–219 (YKREEEEKKSKAKKAGGKGFKK) is disordered. Residues 207–219 (SKAKKAGGKGFKK) show a composition bias toward basic residues. The 168-residue stretch at 345–512 (SRAPVVTIMG…AVLLQSEVLE (168 aa)) folds into the tr-type G domain. Residues 354–361 (GHVDHGKT) are G1. 354–361 (GHVDHGKT) is a GTP binding site. Residues 379–383 (GITQH) form a G2 region. The segment at 400-403 (DTPG) is G3. GTP is bound by residues 400 to 404 (DTPGH) and 454 to 457 (NKID). Residues 454–457 (NKID) form a G4 region. Residues 490-492 (SAK) are G5.

Belongs to the TRAFAC class translation factor GTPase superfamily. Classic translation factor GTPase family. IF-2 subfamily.

It localises to the cytoplasm. One of the essential components for the initiation of protein synthesis. Protects formylmethionyl-tRNA from spontaneous hydrolysis and promotes its binding to the 30S ribosomal subunits. Also involved in the hydrolysis of GTP during the formation of the 70S ribosomal complex. This Francisella tularensis subsp. holarctica (strain OSU18) protein is Translation initiation factor IF-2.